Consider the following 154-residue polypeptide: UPF0178 protein Gbem_2221 (154 aa).

This sequence belongs to the UPF0178 family.

This Citrifermentans bemidjiense (strain ATCC BAA-1014 / DSM 16622 / JCM 12645 / Bem) (Geobacter bemidjiensis) protein is UPF0178 protein Gbem_2221.